The primary structure comprises 730 residues: Stonin-1 (730 aa).

3 disordered regions span residues 1–26, 38–83, and 132–159; these read MYST…KRKD, NGLK…PLST, and SPHV…AGPQ. 2 stretches are compositionally biased toward low complexity: residues 54 to 65 and 132 to 143; these read PSSASSTPLSSP and SPHVSLPSSHSH. The 134-residue stretch at 269-402 folds into the SHD domain; the sequence is GWSFMLRIPE…KLPATAKPKN (134 aa). An MHD domain is found at 407–710; it reads EQEICLDIQD…ACYNIQVEIE (304 aa).

It belongs to the Stoned B family.

It localises to the cytoplasm. The protein resides in the membrane. Its function is as follows. May be involved in the endocytic machinery. This Mus musculus (Mouse) protein is Stonin-1 (Ston1).